A 424-amino-acid polypeptide reads, in one-letter code: Histidine--tRNA ligase (424 aa).

Belongs to the class-II aminoacyl-tRNA synthetase family. In terms of assembly, homodimer.

It localises to the cytoplasm. The enzyme catalyses tRNA(His) + L-histidine + ATP = L-histidyl-tRNA(His) + AMP + diphosphate + H(+). The chain is Histidine--tRNA ligase from Pediococcus pentosaceus (strain ATCC 25745 / CCUG 21536 / LMG 10740 / 183-1w).